A 395-amino-acid polypeptide reads, in one-letter code: Formate-dependent phosphoribosylglycinamide formyltransferase (395 aa).

Residues 22 to 23 (EL) and Glu-82 each bind N(1)-(5-phospho-beta-D-ribosyl)glycinamide. ATP contacts are provided by residues Arg-115, Lys-156, 161-166 (SSGKGQ), 196-199 (EGFI), and Glu-204. The region spanning 120–309 (RLAAETLGLP…EFALHARAIL (190 aa)) is the ATP-grasp domain. Mg(2+) is bound by residues Glu-268 and Glu-280. N(1)-(5-phospho-beta-D-ribosyl)glycinamide is bound by residues Asp-287, Lys-356, and 363-364 (RR).

Belongs to the PurK/PurT family. In terms of assembly, homodimer.

It catalyses the reaction N(1)-(5-phospho-beta-D-ribosyl)glycinamide + formate + ATP = N(2)-formyl-N(1)-(5-phospho-beta-D-ribosyl)glycinamide + ADP + phosphate + H(+). Its pathway is purine metabolism; IMP biosynthesis via de novo pathway; N(2)-formyl-N(1)-(5-phospho-D-ribosyl)glycinamide from N(1)-(5-phospho-D-ribosyl)glycinamide (formate route): step 1/1. Functionally, involved in the de novo purine biosynthesis. Catalyzes the transfer of formate to 5-phospho-ribosyl-glycinamide (GAR), producing 5-phospho-ribosyl-N-formylglycinamide (FGAR). Formate is provided by PurU via hydrolysis of 10-formyl-tetrahydrofolate. The polypeptide is Formate-dependent phosphoribosylglycinamide formyltransferase (Stenotrophomonas maltophilia (strain R551-3)).